The following is a 91-amino-acid chain: Lipolysis-activating peptide 1-alpha chain (91 aa).

Positions M1–G22 are cleaved as a signal peptide. The region spanning S24–K87 is the LCN-type CS-alpha/beta domain. 3 disulfides stabilise this stretch: C38–C61, C47–C66, and C51–C68.

This sequence belongs to the long (3 C-C) scorpion toxin superfamily. In terms of assembly, monomer (edited version) and heterodimer (non-edited version) of this alpha chain and a beta chain (AC P84809). In terms of tissue distribution, expressed by the venom gland.

It localises to the secreted. The heterodimer non-edited LVP1 induces lipolysis in rat adipocytes. Induction of lipolysis by LVP1 appears to be mediated through the beta-2 adrenergic receptor pathway (ADRB2). Intracerebroventricular injection is not toxic to mice. Its function is as follows. The edited BmKBTx-like, similar to beta-toxins, may modulate voltage-gated sodium channels (Nav) and may block voltage-gated potassium channels (Kv). The sequence is that of Lipolysis-activating peptide 1-alpha chain from Buthus occitanus tunetanus (Common European scorpion).